Here is a 314-residue protein sequence, read N- to C-terminus: Olfactory receptor 5P66 (314 aa).

The Extracellular portion of the chain corresponds to 1 to 28 (MAFLENGNHTAVSEFILLGLTDDPVLRI). N-linked (GlcNAc...) asparagine glycosylation occurs at Asn-8. The helical transmembrane segment at 29 to 49 (VLFTIILCIYLVTVSGNLSTI) threads the bilayer. At 50 to 57 (LLIRVSSQ) the chain is on the cytoplasmic side. The helical transmembrane segment at 58–78 (LHHPMYFFLSHLASADIGLSS) threads the bilayer. The Extracellular segment spans residues 79-102 (SVTPNMLVNFLVERSTISYLGCGI). The cysteines at positions 100 and 192 are disulfide-linked. Residues 103–123 (QLSSAALFGATECFLLAAMAY) form a helical membrane-spanning segment. Topologically, residues 124-136 (DRFMAICNPLLYS) are cytoplasmic. Residues 137-157 (TKMSTKVCVQLIVGSYIAGFL) form a helical membrane-spanning segment. The Extracellular portion of the chain corresponds to 158–199 (NASSFLLSFFSLLFCGQNIINDFFCDFAPLAELSCSDVSVFV). The helical transmembrane segment at 200–220 (VVISFSAGTVTMLTVFVIAIS) threads the bilayer. At 221-240 (YSYILITILKMRSTEGRQKA) the chain is on the cytoplasmic side. Residues 241–261 (FSTCTSHLTAVTLFYGTVTFI) traverse the membrane as a helical segment. Topologically, residues 262 to 274 (YVMPKSSYSMDQN) are extracellular. A helical transmembrane segment spans residues 275–295 (KIISVFYMVVVPMLNPLIYSL). Topologically, residues 296-314 (RNNEIKGALKRHFDRKTFS) are cytoplasmic.

It belongs to the G-protein coupled receptor 1 family.

It is found in the cell membrane. Potential odorant receptor. The protein is Olfactory receptor 5P66 of Mus musculus (Mouse).